We begin with the raw amino-acid sequence, 442 residues long: Urokinase-type plasminogen activator (442 aa).

The signal sequence occupies residues 1-20; the sequence is MRVLRACLSLCVLVVSDSKG. In terms of domain architecture, EGF-like spans 29-65; it reads GASNCGCLNGGKCVSYKYFSNIQRCSCPKKFQGEHCE. Intrachain disulfides connect Cys33–Cys41, Cys35–Cys53, Cys55–Cys64, Cys72–Cys153, Cys93–Cys135, Cys124–Cys148, Cys179–Cys310, Cys220–Cys236, Cys228–Cys299, Cys324–Cys393, Cys356–Cys372, and Cys383–Cys411. Positions 36 to 59 are binds urokinase plasminogen activator surface receptor; it reads LNGGKCVSYKYFSNIQRCSCPKKF. The 82-residue stretch at 72–153 folds into the Kringle domain; the sequence is CFEGNGHSYR…LVQECMVPNC (82 aa). N-linked (GlcNAc...) asparagine glycosylation is present at Asn152. The segment at 154 to 189 is connecting peptide; that stretch reads SGGESHRPAYDGKNPFSTPEKVEFQCGQKALRPRFK. Residues 190 to 435 enclose the Peptidase S1 domain; it reads IVGGKSTTIE…FLTWIHTHVG (246 aa). Active-site charge relay system residues include His235 and Asp286. Ser387 (charge relay system) is an active-site residue.

This sequence belongs to the peptidase S1 family. In terms of assembly, found in high and low molecular mass forms. Each consists of two chains, A and B. The high molecular mass form contains a long chain A which is cleaved to yield a short chain A. Forms heterodimer with SERPINA5. Binds LRP1B; binding is followed by internalization and degradation. Interacts with MRC2. Interacts with PLAUR. In complex with SERPINE1, interacts with PLAUR/uPAR. Interacts with SORL1 and LRP1, either alone or in complex with SERPINE1; these interactions are abolished in the presence of LRPAP1/RAP. The ternary complex composed of PLAUR-PLAU-PAI1 also interacts with SORLA. Post-translationally, produced as an inactive single-chain protein (pro-uPA or sc-uPA), is processed into the active disulfide-linked two-chain form of PLAU/uPA by a proteolytic event mediated, at least, by TMPRSS4.

The protein localises to the secreted. The catalysed reaction is Specific cleavage of Arg-|-Val bond in plasminogen to form plasmin.. With respect to regulation, inhibited by SERPINA5. Inhibited by SERPINE1. In terms of biological role, specifically cleaves the zymogen plasminogen to form the active enzyme plasmin. In Sus scrofa (Pig), this protein is Urokinase-type plasminogen activator (PLAU).